We begin with the raw amino-acid sequence, 186 residues long: Probable nicotinate-nucleotide adenylyltransferase (186 aa).

It belongs to the NadD family.

It carries out the reaction nicotinate beta-D-ribonucleotide + ATP + H(+) = deamido-NAD(+) + diphosphate. It participates in cofactor biosynthesis; NAD(+) biosynthesis; deamido-NAD(+) from nicotinate D-ribonucleotide: step 1/1. Catalyzes the reversible adenylation of nicotinate mononucleotide (NaMN) to nicotinic acid adenine dinucleotide (NaAD). The protein is Probable nicotinate-nucleotide adenylyltransferase of Tropheryma whipplei (strain Twist) (Whipple's bacillus).